A 221-amino-acid polypeptide reads, in one-letter code: Ethylene-inducing xylanase 4 (221 aa).

Residues 1–19 form the signal peptide; it reads MVSFSTLLTACTAITGALG. Residues 28–218 form the GH11 domain; it reads NVTPNAQGTH…SAGRASVVVE (191 aa). Asn-96 carries N-linked (GlcNAc...) asparagine glycosylation. The active-site Nucleophile is Glu-114. Residue Glu-205 is the Proton donor of the active site.

This sequence belongs to the glycosyl hydrolase 11 (cellulase G) family.

It carries out the reaction Endohydrolysis of (1-&gt;4)-beta-D-xylosidic linkages in xylans.. It participates in glycan degradation; xylan degradation. Functionally, endo-1,4-beta-xylanase involved in the hydrolysis of xylan, a major structural heterogeneous polysaccharide found in plant biomass representing the second most abundant polysaccharide in the biosphere, after cellulose. May act as an elicitor of plant defense responses in certain plants but does not exhibit any cell death when transiently expressed in N.benthamiana. The sequence is that of Ethylene-inducing xylanase 4 from Verticillium dahliae (strain VdLs.17 / ATCC MYA-4575 / FGSC 10137) (Verticillium wilt).